An 811-amino-acid chain; its full sequence is Probable inorganic carbon transporter subunit DabA (811 aa).

Residues C336, D338, H498, and C513 each contribute to the Zn(2+) site.

This sequence belongs to the inorganic carbon transporter (TC 9.A.2) DabA family. In terms of assembly, forms a complex with DabB. Zn(2+) is required as a cofactor.

It localises to the cell inner membrane. Functionally, part of an energy-coupled inorganic carbon pump. The protein is Probable inorganic carbon transporter subunit DabA of Rhodospirillum centenum (strain ATCC 51521 / SW).